A 256-amino-acid chain; its full sequence is uncharacterized protein (256 aa).

Positions 1–24 (MIKRVNKLVLGISLLFLVISIAAG) are cleaved as a signal peptide. A lipid anchor (N-palmitoyl cysteine) is attached at Cys-25. The S-diacylglycerol cysteine moiety is linked to residue Cys-25.

The protein belongs to the staphylococcal tandem lipoprotein family.

It is found in the cell membrane. This is an uncharacterized protein from Staphylococcus aureus.